Consider the following 227-residue polypeptide: Claudin-15 (227 aa).

Residue Met1 is a topological domain, cytoplasmic. Residues 2–24 traverse the membrane as a helical segment; sequence SVAVETFGFFMSALGLLMLGLTL. Topologically, residues 25–74 are extracellular; that stretch reads SNSYWRVSTVHGNVITTNTIFENLWYSCATDSLGVSNCWDFPSMLALSGY. Cys52 and Cys62 are joined by a disulfide. A helical membrane pass occupies residues 75–99; sequence VQGCRALMITAILLGFLGLFLGMVG. Topologically, residues 100–115 are cytoplasmic; that stretch reads LRCTNVGNMDLSKKAK. Position 111 is a phosphoserine (Ser111). A helical transmembrane segment spans residues 116-140; that stretch reads LLAIAGTLHILAGACGMVAISWYAV. Residues 141 to 159 lie on the Extracellular side of the membrane; that stretch reads NITTDFFNPLYAGTKYELG. Residues 146–147 are important for the formation of tight-junction strand-like structures; it reads FF. A helical membrane pass occupies residues 160-182; the sequence is PALYLGWSASLLSILGGICVFST. The Cytoplasmic portion of the chain corresponds to 183–227; it reads CCCSSKEEPATRAGLPYKPSTVVIPRATSDESDISFGKYGKNAYV. Ser211, Ser214, and Ser217 each carry phosphoserine.

This sequence belongs to the claudin family. Can form homo- and heteropolymeric tight junction strands. Post-translationally, palmitoylated when heterogeneously expressed in S.frugiperda cells. In terms of tissue distribution, detected in duodenum, jejunum and ileum. Detected on intestinal villi and crypts (at protein level). Ubiquitous. Detected in small and large intestine, colon, jejunum, heart, kidney and lung.

It is found in the cell junction. It localises to the tight junction. The protein localises to the cell membrane. The enzyme catalyses Na(+)(in) = Na(+)(out). It catalyses the reaction K(+)(in) = K(+)(out). It carries out the reaction Cs(+)(in) = Cs(+)(out). The catalysed reaction is Rb(+)(in) = Rb(+)(out). The enzyme catalyses Li(+)(in) = Li(+)(out). It catalyses the reaction NH4(+)(in) = NH4(+)(out). It carries out the reaction methylamine(out) = methylamine(in). The catalysed reaction is H2O(in) = H2O(out). Functionally, forms paracellular channels: polymerizes in tight junction strands with cation- and water-selective channels through the strands, conveying epithelial permeability in a process known as paracellular tight junction permeability. In intestinal epithelium, allows for sodium and water fluxes from the peritoneal side to the lumen of the intestine to regulate nutrient absorption and intestinal morphogenesis. The sequence is that of Claudin-15 from Mus musculus (Mouse).